The sequence spans 171 residues: 3-hydroxydecanoyl-[acyl-carrier-protein] dehydratase (171 aa).

His-70 is an active-site residue.

The protein belongs to the thioester dehydratase family. FabA subfamily. As to quaternary structure, homodimer.

It localises to the cytoplasm. The enzyme catalyses a (3R)-hydroxyacyl-[ACP] = a (2E)-enoyl-[ACP] + H2O. It catalyses the reaction (3R)-hydroxydecanoyl-[ACP] = (2E)-decenoyl-[ACP] + H2O. The catalysed reaction is (2E)-decenoyl-[ACP] = (3Z)-decenoyl-[ACP]. It functions in the pathway lipid metabolism; fatty acid biosynthesis. Functionally, necessary for the introduction of cis unsaturation into fatty acids. Catalyzes the dehydration of (3R)-3-hydroxydecanoyl-ACP to E-(2)-decenoyl-ACP and then its isomerization to Z-(3)-decenoyl-ACP. Can catalyze the dehydratase reaction for beta-hydroxyacyl-ACPs with saturated chain lengths up to 16:0, being most active on intermediate chain length. The sequence is that of 3-hydroxydecanoyl-[acyl-carrier-protein] dehydratase from Shewanella woodyi (strain ATCC 51908 / MS32).